The sequence spans 314 residues: Type II methyltransferase M.HpaI (314 aa).

Belongs to the N(4)/N(6)-methyltransferase family.

The enzyme catalyses a 2'-deoxyadenosine in DNA + S-adenosyl-L-methionine = an N(6)-methyl-2'-deoxyadenosine in DNA + S-adenosyl-L-homocysteine + H(+). Functionally, a beta subtype methylase that recognizes the double-stranded sequence 5'-GTTAAC-3', methylates A-5 on both strands, and protects the DNA from cleavage by the HpaI endonuclease. The polypeptide is Type II methyltransferase M.HpaI (hpaIM) (Haemophilus parainfluenzae).